A 307-amino-acid chain; its full sequence is Malate dehydrogenase (307 aa).

Residues 8–13 (GAGNVG) and Asp-32 contribute to the NAD(+) site. Substrate is bound by residues Arg-81 and Arg-87. Residues Asn-94 and 117–119 (VSN) each bind NAD(+). Substrate-binding residues include Asn-119 and Arg-150. His-174 (proton acceptor) is an active-site residue.

This sequence belongs to the LDH/MDH superfamily. MDH type 3 family.

The enzyme catalyses (S)-malate + NAD(+) = oxaloacetate + NADH + H(+). Its function is as follows. Catalyzes the reversible oxidation of malate to oxaloacetate. This chain is Malate dehydrogenase, found in Dehalococcoides mccartyi (strain CBDB1).